The sequence spans 70 residues: Conotoxin Cal6.11 (70 aa).

Positions M1–A22 are cleaved as a signal peptide. Positions D23–S43 are excised as a propeptide. 3 disulfides stabilise this stretch: C46/C57, C50/C62, and C56/C69. 2 positions are modified to 4-hydroxyproline: P48 and P58. 4-carboxyglutamate is present on residues E60 and E67.

Belongs to the conotoxin O1 superfamily. As to expression, expressed by the venom duct.

The protein resides in the secreted. Functionally, probable neurotoxin with unknown target. Possibly targets ion channels. In Californiconus californicus (California cone), this protein is Conotoxin Cal6.11.